The sequence spans 1227 residues: Pentatricopeptide repeat-containing protein At5g15280, mitochondrial (1227 aa).

A mitochondrion-targeting transit peptide spans Met1 to Phe31. 28 PPR repeats span residues Leu146–Met180, Asn182–Pro216, Leu217–Leu251, Asn255–Leu289, Asn290–Glu320, Asp322–Gln356, Asp357–Pro391, Asp392–Leu426, Ser427–Glu461, Val527–Leu561, Ser562–Leu597, Asp598–Ile632, Asp633–Pro667, Asp668–Ser698, Gln703–Val737, Glu738–Pro772, Ser773–Ile800, Ser802–Ser836, Tyr837–Cys871, Ser872–Pro906, Gly908–Pro942, Asp943–Pro977, Asn978–Leu1012, Ser1014–Asn1044, Met1047–Pro1081, Gly1082–Pro1116, Ser1117–Pro1151, and Ser1152–Val1186.

It belongs to the PPR family. P subfamily.

It is found in the mitochondrion. The polypeptide is Pentatricopeptide repeat-containing protein At5g15280, mitochondrial (Arabidopsis thaliana (Mouse-ear cress)).